The following is an 820-amino-acid chain: Chitinase A (820 aa).

A signal peptide spans 1 to 21 (MKLNKITSYIGFALLSGGALA). One can recognise a GH18 domain in the interval 158–588 (RVTGAYFVEW…NAMYDGLTAG (431 aa)). Glu313 serves as the catalytic Proton donor.

The protein belongs to the glycosyl hydrolase 18 family. Chitinase class II subfamily.

It catalyses the reaction Random endo-hydrolysis of N-acetyl-beta-D-glucosaminide (1-&gt;4)-beta-linkages in chitin and chitodextrins.. Stimulated by magnesium ions; inhibited by N-bromosuccinimide and 2-hydroxy-5-nitrobenzyl bromide. This chain is Chitinase A (chiA), found in Pseudoalteromonas piscicida.